Consider the following 547-residue polypeptide: Cytochrome P450 monooxygenase fsoD (547 aa).

A helical transmembrane segment spans residues 3-23; the sequence is DITLAAVSIGLFFYVGARAVL. Cys490 is a binding site for heme.

This sequence belongs to the cytochrome P450 family. Requires heme as cofactor.

It localises to the membrane. The catalysed reaction is isomotiol + reduced [NADPH--hemoprotein reductase] + O2 = 2alpha-hydroxyisomotiol + oxidized [NADPH--hemoprotein reductase] + H2O + H(+). It participates in secondary metabolite biosynthesis; terpenoid biosynthesis. Cytochrome P450 monooxygenase; part of the gene cluster that mediates the biosynthesis of the enfumafungin-type antibiotic, fuscoatroside. Within the pathway, fsoD catalyzes the hydroxylation at position C2 of isomotiol to produce 2-alpha-hydroxy-isomotiol. FsoD may also hydroxylate the intermediates 3-O-(beta-D-glucopyranosyl)-isomotiol and 2-deacetoxy-fuscoatroside at the same position C2. The fuscoatroside biosynthesis is initiated by the cyclization of 2,3(S)-oxidosqualene through FsoA's terpene cyclase (TC) domain, leading to the formation of the fernane skeleton isomotiol, harboring a fernane triterpene skeleton with a C8-C9 double bond. Subsequently, C2-alpha-hydroxylation mediated by fsoD results in the production of 2-alpha-hydroxy-isomotiol, which is further acetylated by fsoF. The glycosyltransferase (GT) domain of FsoA may convert isomotiol, 2-alpha-hydroxy-isomotiol, and the acetylated derivative of 2-alpha-hydroxy-isomotiol into their corresponding glycosides 3-O-(beta-D-glucopyranosyl)-isomotiol, 3-O-(beta-D-glucopyranosyl)-2-alpha-hydroxy-isomotiol, and 3-O-(beta-D-glucopyranosyl)-2-alpha-acetoxy-isomotiol, which then undergo oxidative cleavage under the action of fsoE to form s 2-deacetoxy-fuscoatroside, 2-deacetyl-fuscoatroside, and fuscoatroside, respectively. Although hydroxylation followed by acetylation of 3-O-(beta-D-glucopyranosyl)-isomotiol and 2-deacetoxy-fuscoatroside by fsoD and fsoF could not be ruled out, this process is likely to occur with difficulty due to bulky steric hindrance caused by the presence of a glycan at C3 in these compounds. Interestingly, fsoE can also utilize the aglycones isomotiol and 2-alpha-hydroxy-isomotiol as substrates to generate 19-beta-hydroxy-isomotiol and 2-alpha,19-beta-dihydroxy-isomotiol, respectively. These reactions occur with lower efficiency. Finally, fsoE can further convert 2-alpha,19-beta-dihydroxy-isomotiol into 2-alpha-hydroxy-ismotiol-19-one and 2-alpha-hydroxy-ismotiol-19-one into 2-deacetyl-3-deglucopyranosyl-fuscoatroside. In Humicola fuscoatra, this protein is Cytochrome P450 monooxygenase fsoD.